A 103-amino-acid polypeptide reads, in one-letter code: Photosystem II 5 kDa protein, chloroplastic (103 aa).

The N-terminal 75 residues, 1–75, are a transit peptide targeting the chloroplast; sequence MASMTMTATF…LAKVAMAEEE (75 aa).

The maturation of the PSII-T precursor to its final form occurs through a two step process. First, a stromal intermediate is formed, which, upon translocation into the thylakoid membrane, is processed to the mature protein.

It localises to the plastid. The protein resides in the chloroplast thylakoid membrane. Its function is as follows. May be a component of the oxygen-evolving complex. The sequence is that of Photosystem II 5 kDa protein, chloroplastic (PSBT) from Arabidopsis thaliana (Mouse-ear cress).